A 187-amino-acid chain; its full sequence is Large ribosomal subunit protein uL5 (187 aa).

This sequence belongs to the universal ribosomal protein uL5 family. As to quaternary structure, part of the 50S ribosomal subunit; part of the 5S rRNA/L5/L18/L25 subcomplex. Contacts the 5S rRNA and the P site tRNA. Forms a bridge to the 30S subunit in the 70S ribosome.

This is one of the proteins that bind and probably mediate the attachment of the 5S RNA into the large ribosomal subunit, where it forms part of the central protuberance. In the 70S ribosome it contacts protein S13 of the 30S subunit (bridge B1b), connecting the 2 subunits; this bridge is implicated in subunit movement. Contacts the P site tRNA; the 5S rRNA and some of its associated proteins might help stabilize positioning of ribosome-bound tRNAs. The chain is Large ribosomal subunit protein uL5 from Mycolicibacterium paratuberculosis (strain ATCC BAA-968 / K-10) (Mycobacterium paratuberculosis).